The primary structure comprises 301 residues: Asialoglycoprotein receptor 2 (301 aa).

A disordered region spans residues 1-43; that stretch reads MEKDCQDIQQLDSEENDHQLSGDDEHGSHVQDPRIENPHWKGQ. Over 1–58 the chain is Cytoplasmic; the sequence is MEKDCQDIQQLDSEENDHQLSGDDEHGSHVQDPRIENPHWKGQPLSRPFPQRLCSTFR. Ser-13 carries the post-translational modification Phosphoserine. The segment covering 16–39 has biased composition (basic and acidic residues); sequence NDHQLSGDDEHGSHVQDPRIENPH. A lipid anchor (S-palmitoyl cysteine) is attached at Cys-54. The chain crosses the membrane as a helical; Signal-anchor for type II membrane protein span at residues 59-79; the sequence is LSLLALAFNILLLVVICVVSS. Topologically, residues 80–301 are extracellular; sequence QSIQLQEEFR…VCEKRRNITH (222 aa). 2 N-linked (GlcNAc...) asparagine glycosylation sites follow: Asn-97 and Asn-165. One can recognise a C-type lectin domain in the interval 169 to 295; the sequence is CCPVNWVEFG…QQVNRWVCEK (127 aa). 3 cysteine pairs are disulfide-bonded: Cys-170–Cys-181, Cys-198–Cys-293, and Cys-271–Cys-285. An N-linked (GlcNAc...) asparagine glycan is attached at Asn-298.

Interacts with LASS2. Expressed exclusively in hepatic parenchymal cells.

The protein localises to the membrane. Its function is as follows. Mediates the endocytosis of plasma glycoproteins to which the terminal sialic acid residue on their complex carbohydrate moieties has been removed. The receptor recognizes terminal galactose and N-acetylgalactosamine units. After ligand binding to the receptor, the resulting complex is internalized and transported to a sorting organelle, where receptor and ligand are disassociated. The receptor then returns to the cell membrane surface. In Mus musculus (Mouse), this protein is Asialoglycoprotein receptor 2 (Asgr2).